Here is a 3674-residue protein sequence, read N- to C-terminus: Dystrophin-1 (3674 aa).

The disordered stretch occupies residues 1 to 25 (MLFSGASTAKPKKDEKKDKKSDRDP). Residues 11 to 25 (PKKDEKKDKKSDRDP) are compositionally biased toward basic and acidic residues. Residues 30–39 (QEWVFVRWAN) are actin-binding. In terms of domain architecture, Calponin-homology (CH) spans 129 to 234 (EKLSEAIKQW…YLMSLYLAMI (106 aa)). The tract at residues 265–325 (SQPSTSSSSA…KSGKSKKARR (61 aa)) is disordered. Spectrin repeat units lie at residues 327–435 (EQLA…VLQQ), 436–541 (QIHL…KLDG), and 612–656 (CELV…TLVK). Over residues 655–674 (VKSGKADVKQVQESQNEQKE) the composition is skewed to basic and acidic residues. Disordered stretches follow at residues 655 to 689 (VKSG…TEGE), 968 to 991 (NSQM…EKRR), 1587 to 1606 (ASAE…SSPS), 1796 to 1833 (LSAT…SRSS), and 2387 to 2466 (MNDS…GSTG). Residues 675–685 (QPASSEGLSTD) are compositionally biased toward polar residues. Positions 975–991 (TVEKAETRKAEMEEKRR) are enriched in basic and acidic residues. The segment covering 1796-1830 (LSATEKKPVETVKSTIPDRPEVPEEPEKSSPDRTS) has biased composition (basic and acidic residues). Residues 2391–2411 (GGDTTESRSTVVEMTSVHTKQ) show a composition bias toward polar residues. Spectrin repeat units lie at residues 2576-2673 (RNEM…VLEA), 2725-2789 (FKTL…RLEK), 2792-2905 (QEWE…RLKK), and 2926-3032 (QRLQ…AVRN). The WW domain maps to 3047-3081 (QSVTLPWQRAISKSNLLPYYIEQTSEKTQWEHPVW). Residues 3301–3357 (KHASKCNVCKMFPIIGIRYRCLTCFNCDLCQNCFFSQRTAKSHRTNHPMQEYCEKTT) form a ZZ-type zinc finger. Zn(2+) is bound by residues Cys3306, Cys3309, Cys3321, Cys3324, Cys3330, Cys3333, His3343, and His3347. 2 disordered regions span residues 3481 to 3522 (STME…TQSQ) and 3568 to 3645 (KQQA…QMQN). The span at 3568 to 3579 (KQQAPLSTNSLL) shows a compositional bias: polar residues.

Component of the dystrophin glycoprotein complex (DGC). Interacts with dyb-1 and stn-1 to form the DGC. Interacts with stn-2. Expressed in body wall, head, pharyngeal and vulval muscles, from late embryogenesis to adulthood (at protein level).

It is found in the cell membrane. It localises to the sarcolemma. Its subcellular location is the cytoplasm. The protein localises to the cytoskeleton. Plays a role in cholinergic transmission and as a functional partner of dystrobrevin (dyb-1), necessary for muscle maintenance. Required for neuronal positioning. May play a role in the localization of slo-1 near dense bodies in the muscle. This is Dystrophin-1 (dys-1) from Caenorhabditis elegans.